The following is an 897-amino-acid chain: Isoleucine--tRNA ligase (897 aa).

Positions 59–69 (PYANGDIHVGH) match the 'HIGH' region motif. Glu552 is an L-isoleucyl-5'-AMP binding site. The 'KMSKS' region signature appears at 593–597 (KMSKS). Lys596 contributes to the ATP binding site. Zn(2+) contacts are provided by Cys872, Cys875, Cys890, and Cys893.

This sequence belongs to the class-I aminoacyl-tRNA synthetase family. IleS type 1 subfamily. As to quaternary structure, monomer. Zn(2+) is required as a cofactor.

The protein localises to the cytoplasm. It carries out the reaction tRNA(Ile) + L-isoleucine + ATP = L-isoleucyl-tRNA(Ile) + AMP + diphosphate. In terms of biological role, catalyzes the attachment of isoleucine to tRNA(Ile). As IleRS can inadvertently accommodate and process structurally similar amino acids such as valine, to avoid such errors it has two additional distinct tRNA(Ile)-dependent editing activities. One activity is designated as 'pretransfer' editing and involves the hydrolysis of activated Val-AMP. The other activity is designated 'posttransfer' editing and involves deacylation of mischarged Val-tRNA(Ile). This is Isoleucine--tRNA ligase from Mycoplasmoides gallisepticum (strain R(low / passage 15 / clone 2)) (Mycoplasma gallisepticum).